The primary structure comprises 399 residues: S-adenosylmethionine synthase (399 aa).

His-16 provides a ligand contact to ATP. Asp-18 serves as a coordination point for Mg(2+). Glu-44 lines the K(+) pocket. Positions 57 and 100 each coordinate L-methionine. Positions 100-110 are flexible loop; that stretch reads QSSDIAQGVNE. Residues 177 to 179, 244 to 245, Asp-253, 259 to 260, Ala-276, and Lys-280 contribute to the ATP site; these read DAK, RF, and RK. L-methionine is bound at residue Asp-253. Residue Lys-284 participates in L-methionine binding.

The protein belongs to the AdoMet synthase family. As to quaternary structure, homotetramer; dimer of dimers. Mg(2+) is required as a cofactor. Requires K(+) as cofactor.

The protein resides in the cytoplasm. It catalyses the reaction L-methionine + ATP + H2O = S-adenosyl-L-methionine + phosphate + diphosphate. Its pathway is amino-acid biosynthesis; S-adenosyl-L-methionine biosynthesis; S-adenosyl-L-methionine from L-methionine: step 1/1. Its function is as follows. Catalyzes the formation of S-adenosylmethionine (AdoMet) from methionine and ATP. The overall synthetic reaction is composed of two sequential steps, AdoMet formation and the subsequent tripolyphosphate hydrolysis which occurs prior to release of AdoMet from the enzyme. In Lactococcus lactis subsp. lactis (strain IL1403) (Streptococcus lactis), this protein is S-adenosylmethionine synthase.